A 365-amino-acid polypeptide reads, in one-letter code: Holliday junction branch migration complex subunit RuvB (365 aa).

A compositionally biased stretch (polar residues) spans 1-10 (MAIVSSNAAS). Residues 1–48 (MAIVSSNAASQRPRPDRGPDRVPNRVVDGARQAEDDRDPGRVGAKEDS) are disordered. 2 stretches are compositionally biased toward basic and acidic residues: residues 13–23 (PRPDRGPDRVP) and 31–48 (RQAE…KEDS). Residues 13–210 (PRPDRGPDRV…FGLIQRLEFY (198 aa)) are large ATPase domain (RuvB-L). 9 residues coordinate ATP: Leu49, Arg50, Gly91, Lys94, Thr95, Thr96, Arg200, Tyr210, and Arg247. Thr95 contacts Mg(2+). The tract at residues 211–282 (GLEDLQAIVE…LVDEALTLHR (72 aa)) is small ATPAse domain (RuvB-S). Residues 285–365 (GRGLDASDRR…GWPYPQEQAA (81 aa)) are head domain (RuvB-H). Residues Arg340 and Arg345 each contribute to the DNA site.

It belongs to the RuvB family. Homohexamer. Forms an RuvA(8)-RuvB(12)-Holliday junction (HJ) complex. HJ DNA is sandwiched between 2 RuvA tetramers; dsDNA enters through RuvA and exits via RuvB. An RuvB hexamer assembles on each DNA strand where it exits the tetramer. Each RuvB hexamer is contacted by two RuvA subunits (via domain III) on 2 adjacent RuvB subunits; this complex drives branch migration. In the full resolvosome a probable DNA-RuvA(4)-RuvB(12)-RuvC(2) complex forms which resolves the HJ.

Its subcellular location is the cytoplasm. It carries out the reaction ATP + H2O = ADP + phosphate + H(+). The RuvA-RuvB-RuvC complex processes Holliday junction (HJ) DNA during genetic recombination and DNA repair, while the RuvA-RuvB complex plays an important role in the rescue of blocked DNA replication forks via replication fork reversal (RFR). RuvA specifically binds to HJ cruciform DNA, conferring on it an open structure. The RuvB hexamer acts as an ATP-dependent pump, pulling dsDNA into and through the RuvAB complex. RuvB forms 2 homohexamers on either side of HJ DNA bound by 1 or 2 RuvA tetramers; 4 subunits per hexamer contact DNA at a time. Coordinated motions by a converter formed by DNA-disengaged RuvB subunits stimulates ATP hydrolysis and nucleotide exchange. Immobilization of the converter enables RuvB to convert the ATP-contained energy into a lever motion, pulling 2 nucleotides of DNA out of the RuvA tetramer per ATP hydrolyzed, thus driving DNA branch migration. The RuvB motors rotate together with the DNA substrate, which together with the progressing nucleotide cycle form the mechanistic basis for DNA recombination by continuous HJ branch migration. Branch migration allows RuvC to scan DNA until it finds its consensus sequence, where it cleaves and resolves cruciform DNA. This chain is Holliday junction branch migration complex subunit RuvB, found in Synechococcus sp. (strain WH7803).